The primary structure comprises 70 residues: Large ribosomal subunit protein bL31 (70 aa).

Zn(2+) is bound by residues Cys-16, Cys-18, Cys-37, and Cys-40.

It belongs to the bacterial ribosomal protein bL31 family. Type A subfamily. Part of the 50S ribosomal subunit. Requires Zn(2+) as cofactor.

Its function is as follows. Binds the 23S rRNA. The polypeptide is Large ribosomal subunit protein bL31 (Shewanella woodyi (strain ATCC 51908 / MS32)).